We begin with the raw amino-acid sequence, 327 residues long: Leucotoxin LukD (327 aa).

The signal sequence occupies residues 1–26 (MKIEKLGKSSVASSIALLLLSNTVDA).

The protein belongs to the aerolysin family. Toxicity requires sequential binding and synergistic association of a class S and a class F component which form heterooligomeric complexes. LukE (class S) associates with LukD (class F). LukD can also associate with HlgA.

It is found in the secreted. Part of a bi-component leucotoxin that acts by forming pores in the membrane of the target cells. LukE-LukD is as effective as the Panton-Valentine leucocidin (PVL) for inducing dermonecrosis when injected in the rabbit skin, but not hemolytic and poorly leucotoxic on human blood cells compared to other leucotoxins expressed by S.aureus. HlgA-LukD is a Ca(2+) channel inducer. In Staphylococcus aureus, this protein is Leucotoxin LukD (lukD).